Consider the following 79-residue polypeptide: Small serum protein 3 (79 aa).

The first 19 residues, 1 to 19 (MKVFFILIIFSFTLATCQG), serve as a signal peptide directing secretion. 3 disulfides stabilise this stretch: C21–C72, C39–C64, and C62–C71.

The protein localises to the secreted. Its function is as follows. Shows an slight inhibitory effect toward the metalloproteinase brevilysin H6, but does not inhibit the metalloproteinases thermolysin, HR1A and HR1B. In Protobothrops flavoviridis (Habu), this protein is Small serum protein 3.